A 115-amino-acid polypeptide reads, in one-letter code: MNNIIQLLETEQTQGKEIPDFRAGDTVTVQVKVKEGNRERLQAFEGVVIARRHRGLNSSFTVRKVSHGEGVERVFQLYSPLIASIKVNRRGDVRRAKLYYLRNLRGRKAKIKEKI.

Belongs to the bacterial ribosomal protein bL19 family.

In terms of biological role, this protein is located at the 30S-50S ribosomal subunit interface and may play a role in the structure and function of the aminoacyl-tRNA binding site. The protein is Large ribosomal subunit protein bL19 of Coxiella burnetii (strain CbuK_Q154) (Coxiella burnetii (strain Q154)).